Reading from the N-terminus, the 346-residue chain is Eukaryotic translation initiation factor 3 subunit I (346 aa).

WD repeat units follow at residues 8 to 47, 50 to 89, 150 to 189, 192 to 233, and 289 to 328; these read GHERSLTQVKYNREGDLIFTSGKDNVASVWYAMNGERLGT, GHNGSIWSIDVDQHTEYAVTGSADFSVKVWRVRDGSIAHS, EGCAPVLVASWSYDGKYIVAGHQDGKISKYNGVTGECLEI, LHKQ…KTYE, and DHFGPVNYIAVSPQGTSYASGGEDGFVRLHHFDKSYFDFK.

It belongs to the eIF-3 subunit I family. Component of the eukaryotic translation initiation factor 3 (eIF-3) complex.

It localises to the cytoplasm. Its function is as follows. Component of the eukaryotic translation initiation factor 3 (eIF-3) complex, which is involved in protein synthesis of a specialized repertoire of mRNAs and, together with other initiation factors, stimulates binding of mRNA and methionyl-tRNAi to the 40S ribosome. The eIF-3 complex specifically targets and initiates translation of a subset of mRNAs involved in cell proliferation. The chain is Eukaryotic translation initiation factor 3 subunit I from Eremothecium gossypii (strain ATCC 10895 / CBS 109.51 / FGSC 9923 / NRRL Y-1056) (Yeast).